A 131-amino-acid chain; its full sequence is Small ribosomal subunit protein uS8 (131 aa).

This sequence belongs to the universal ribosomal protein uS8 family. As to quaternary structure, part of the 30S ribosomal subunit. Contacts proteins S5 and S12.

Its function is as follows. One of the primary rRNA binding proteins, it binds directly to 16S rRNA central domain where it helps coordinate assembly of the platform of the 30S subunit. This chain is Small ribosomal subunit protein uS8, found in Rhizorhabdus wittichii (strain DSM 6014 / CCUG 31198 / JCM 15750 / NBRC 105917 / EY 4224 / RW1) (Sphingomonas wittichii).